Here is a 252-residue protein sequence, read N- to C-terminus: Urease accessory protein UreH (252 aa).

This sequence belongs to the UreD family. In terms of assembly, ureH, UreF and UreG form a complex that acts as a GTP-hydrolysis-dependent molecular chaperone, activating the urease apoprotein by helping to assemble the nickel containing metallocenter of UreC. The UreE protein probably delivers the nickel.

It localises to the cytoplasm. In terms of biological role, required for maturation of urease via the functional incorporation of the urease nickel metallocenter. The chain is Urease accessory protein UreH from Helicobacter hepaticus (strain ATCC 51449 / 3B1).